We begin with the raw amino-acid sequence, 1412 residues long: ABC transporter C family member 3 (1412 aa).

The interval 1–34 is disordered; the sequence is MELEEVGVEANQPNNDQGSKKQNKNKDKKVKKEK. Positions 21-34 are enriched in basic residues; sequence KQNKNKDKKVKKEK. The next 6 membrane-spanning stretches (helical) occupy residues 115–135, 161–181, 236–256, 261–281, 346–366, and 379–399; these read FGLYFVLSWFFYAIYAASQFV, MGYYYALIMFGSAMIGSVCLY, VFQLVNNGVFALPQIIVCLAL, IGWPTFVGLGLMLAAVPFNGI, AMLIVIVAALPTAVSVLVFSS, and IFAALSYLNILRLPLGFLPII. Residues 119 to 405 form the ABC transmembrane type-1 1 domain; it reads FVLSWFFYAI…LPIIVALGIQ (287 aa). The ABC transporter 1 domain occupies 439-662; it reads IRDATLTWNQ…QKEFSGLLQA (224 aa). 474-481 is an ATP binding site; sequence GSVGSGKS. A run of 5 helical transmembrane segments spans residues 724–744, 787–807, 854–874, 875–895, and 967–987; these read WKYITVGGGFLFLMAFIFFLM, IYIGVGMTSILISAGRNFLFF, NLMATSISQFLVFFTTVVATL, IIISIITPFLLVPLAPICIIF, and WLGLRLDLLANLVTFFACLFI. One can recognise an ABC transmembrane type-1 2 domain in the interval 735–1025; sequence FLMAFIFFLM…ATLQAADTET (291 aa). Residues 1062-1296 form the ABC transporter 2 domain; the sequence is ITFDNLVMRY…PAGLLNWLVE (235 aa). Residue 1096 to 1103 coordinates ATP; it reads GRTGAGKS. The tract at residues 1316 to 1412 is disordered; the sequence is GVNIDQITPP…DNDNSEAGDN (97 aa). A compositionally biased stretch (polar residues) spans 1342–1351; it reads NINSPPQQSL. Residues 1367 to 1397 show a composition bias toward low complexity; sequence DNNNNNNNNNNNNNNNNNNNNNNNNNNNNND. Positions 1398 to 1412 are enriched in acidic residues; that stretch reads NDNDNDNDNSEAGDN.

Belongs to the ABC transporter superfamily. ABCC family. Conjugate transporter (TC 3.A.1.208) subfamily.

It localises to the membrane. The sequence is that of ABC transporter C family member 3 (abcC3) from Dictyostelium discoideum (Social amoeba).